Consider the following 97-residue polypeptide: Zinc metalloproteinase-disintegrin-like bothrojarin-4 (97 aa).

One can recognise a Disintegrin domain in the interval 4–90 (PPVCGNYFVE…DCPTDRFRRN (87 aa)). Residues Val6, Asn9, Phe11, Glu13, Glu16, and Asp19 each contribute to the Ca(2+) site. 7 disulfides stabilise this stretch: Cys7–Cys36, Cys18–Cys31, Cys20–Cys26, Cys30–Cys53, Cys44–Cys50, Cys49–Cys75, and Cys62–Cys82. Asn32 is a glycosylation site (N-linked (GlcNAc...) asparagine). The D/ECD-tripeptide; atypical (KCD) signature appears at 68-70 (KCD).

It belongs to the venom metalloproteinase (M12B) family. P-III subfamily. P-IIIa sub-subfamily. Monomer. The cofactor is Zn(2+). In terms of tissue distribution, expressed by the venom gland.

The protein localises to the secreted. Its function is as follows. The hemorrhagic metalloproteinase-disintegrin-like bothrojarin-1 is a potent inhibitor of collagen-induced platelet aggregation by blockage of alpha-2/beta-1 (ITGA2/ITGB1) integrin. It does not present any fibrinogen-clotting activity. This chain is Zinc metalloproteinase-disintegrin-like bothrojarin-4, found in Bothrops jararaca (Jararaca).